We begin with the raw amino-acid sequence, 356 residues long: MKKIVFTGGGTVGHVTLNLLLIPKFIKEGWQVHYVGDKHGIEYQEIQKSGLDVTFHSVATGKLRRYFSWQNLLDGFKVVWGIFQSLGIMLKVRPQALFSKGGFVSVPPVIAARLSGVPVYVHESDLSIGLANKIAYKCATKMYATFEQPSSLNKIEHVGAVTKVGSQESVLPQELEEIRQYFDKELPTLLFVGGSAGAKVFNDFVSQNQAALTERYNVINLTGDASLDVLSERLFRRAYVTDLYQPLMDLADVVVTRGGSNTIFELLAMAKLHIIVPLGREASRGDQIENADYFVKKGYAKQLAEEQLDMSHLQAALDDLLANQASYHQAMKNSQEIKSVDEFYALLKADIDKGKK.

2 residues coordinate UDP-N-acetyl-alpha-D-glucosamine: Ser195 and Gln287.

Belongs to the glycosyltransferase 28 family. MurG subfamily.

Its subcellular location is the cell membrane. It carries out the reaction Mur2Ac(oyl-L-Ala-gamma-D-Glu-L-Lys-D-Ala-D-Ala)-di-trans,octa-cis-undecaprenyl diphosphate + UDP-N-acetyl-alpha-D-glucosamine = beta-D-GlcNAc-(1-&gt;4)-Mur2Ac(oyl-L-Ala-gamma-D-Glu-L-Lys-D-Ala-D-Ala)-di-trans,octa-cis-undecaprenyl diphosphate + UDP + H(+). The protein operates within cell wall biogenesis; peptidoglycan biosynthesis. Functionally, cell wall formation. Catalyzes the transfer of a GlcNAc subunit on undecaprenyl-pyrophosphoryl-MurNAc-pentapeptide (lipid intermediate I) to form undecaprenyl-pyrophosphoryl-MurNAc-(pentapeptide)GlcNAc (lipid intermediate II). This chain is UDP-N-acetylglucosamine--N-acetylmuramyl-(pentapeptide) pyrophosphoryl-undecaprenol N-acetylglucosamine transferase, found in Streptococcus sanguinis (strain SK36).